We begin with the raw amino-acid sequence, 189 residues long: MELLEERIKKDGVVLPGNVLKVNSFLNHQIDPQLMMTLGQEFARLFKDAGVTRVLTAEASGIAPGIMAAYCLGVPMVFARKKKPSTVTDAVYTAEVFSYTKQVTNTISVEAKFLDANDRILVIDDFLANGEAAKGLISLAEQAGAEVVGVGVVVEKAFQGGHDWLVNHGYHLEALASIKEFADGQVIFN.

Leu-20 and Asn-27 together coordinate xanthine. A 5-phospho-alpha-D-ribose 1-diphosphate-binding site is contributed by Ala-128 to Ala-132. Lys-156 contacts xanthine.

The protein belongs to the purine/pyrimidine phosphoribosyltransferase family. Xpt subfamily. As to quaternary structure, homodimer.

It localises to the cytoplasm. It catalyses the reaction XMP + diphosphate = xanthine + 5-phospho-alpha-D-ribose 1-diphosphate. The protein operates within purine metabolism; XMP biosynthesis via salvage pathway; XMP from xanthine: step 1/1. In terms of biological role, converts the preformed base xanthine, a product of nucleic acid breakdown, to xanthosine 5'-monophosphate (XMP), so it can be reused for RNA or DNA synthesis. This is Xanthine phosphoribosyltransferase from Lactobacillus delbrueckii subsp. bulgaricus (strain ATCC 11842 / DSM 20081 / BCRC 10696 / JCM 1002 / NBRC 13953 / NCIMB 11778 / NCTC 12712 / WDCM 00102 / Lb 14).